Consider the following 945-residue polypeptide: Isoleucine--tRNA ligase 1 (945 aa).

The 'HIGH' region motif lies at Pro-66–His-76. L-isoleucyl-5'-AMP is bound at residue Glu-581. The short motif at Lys-622–Ser-626 is the 'KMSKS' region element. Lys-625 is a binding site for ATP. Zn(2+) is bound by residues Cys-908, Cys-911, Cys-928, and Cys-931.

This sequence belongs to the class-I aminoacyl-tRNA synthetase family. IleS type 1 subfamily. In terms of assembly, monomer. The cofactor is Zn(2+).

Its subcellular location is the cytoplasm. It carries out the reaction tRNA(Ile) + L-isoleucine + ATP = L-isoleucyl-tRNA(Ile) + AMP + diphosphate. Functionally, catalyzes the attachment of isoleucine to tRNA(Ile). As IleRS can inadvertently accommodate and process structurally similar amino acids such as valine, to avoid such errors it has two additional distinct tRNA(Ile)-dependent editing activities. One activity is designated as 'pretransfer' editing and involves the hydrolysis of activated Val-AMP. The other activity is designated 'posttransfer' editing and involves deacylation of mischarged Val-tRNA(Ile). The polypeptide is Isoleucine--tRNA ligase 1 (Burkholderia mallei (strain ATCC 23344)).